A 152-amino-acid chain; its full sequence is Putative pre-16S rRNA nuclease (152 aa).

The protein belongs to the YqgF nuclease family.

The protein localises to the cytoplasm. Functionally, could be a nuclease involved in processing of the 5'-end of pre-16S rRNA. This chain is Putative pre-16S rRNA nuclease, found in Synechocystis sp. (strain ATCC 27184 / PCC 6803 / Kazusa).